The primary structure comprises 408 residues: DNA-directed RNA polymerase subunit Rpo1C (408 aa).

It belongs to the RNA polymerase beta' chain family. Part of the RNA polymerase complex.

The protein resides in the cytoplasm. It carries out the reaction RNA(n) + a ribonucleoside 5'-triphosphate = RNA(n+1) + diphosphate. DNA-dependent RNA polymerase (RNAP) catalyzes the transcription of DNA into RNA using the four ribonucleoside triphosphates as substrates. Forms part of the jaw domain. The polypeptide is DNA-directed RNA polymerase subunit Rpo1C (Methanosarcina mazei (strain ATCC BAA-159 / DSM 3647 / Goe1 / Go1 / JCM 11833 / OCM 88) (Methanosarcina frisia)).